The primary structure comprises 144 residues: Glycine-rich protein HC1 (144 aa).

The chain crosses the membrane as a helical span at residues 5–25; the sequence is IFLLLGLSIAFAILISSEVAA. Tandem repeats lie at residues 37–42, 43–48, 50–55, 56–61, 63–68, 69–74, 76–81, 82–87, 89–94, 102–107, and 108–113. The segment at 37 to 113 is 11 X 6 AA tandem repeats of G-Y-[NH]-N-G -G; it reads GYNNGGGYHN…NNGGGYHGGG (77 aa).

It belongs to the GRP family.

Its subcellular location is the membrane. This is Glycine-rich protein HC1 from Oxybasis rubra (Red goosefoot).